Reading from the N-terminus, the 874-residue chain is Alanine--tRNA ligase (874 aa).

Residues His-564, His-568, Cys-665, and His-669 each contribute to the Zn(2+) site.

The protein belongs to the class-II aminoacyl-tRNA synthetase family. Requires Zn(2+) as cofactor.

It is found in the cytoplasm. It carries out the reaction tRNA(Ala) + L-alanine + ATP = L-alanyl-tRNA(Ala) + AMP + diphosphate. Catalyzes the attachment of alanine to tRNA(Ala) in a two-step reaction: alanine is first activated by ATP to form Ala-AMP and then transferred to the acceptor end of tRNA(Ala). Also edits incorrectly charged Ser-tRNA(Ala) and Gly-tRNA(Ala) via its editing domain. The chain is Alanine--tRNA ligase from Paraburkholderia xenovorans (strain LB400).